We begin with the raw amino-acid sequence, 819 residues long: Protein kinase C-binding protein NELL2 (819 aa).

The first 24 residues, 1–24 (MHAMESRVLLRTFCVILGLGAVWG), serve as a signal peptide directing secretion. Asparagine 56, asparagine 228, asparagine 296, and asparagine 301 each carry an N-linked (GlcNAc...) asparagine glycan. Positions 67 to 231 (PRSIKASTAT…AQCPDLNRTC (165 aa)) constitute a Laminin G-like domain. Residues 275–334 (RTCTVKGTTYRESESWTDGCKNCTCLNGTIQCETLVCPAPDCPPKSAPAYVDGKCCKECK) form the VWFC 1 domain. The EGF-like 1 domain occupies 400 to 442 (GYDFCSEKHTCMENSVCRNLNDRAVCSCRDGFRALREDNAYCE). 3 cysteine pairs are disulfide-bonded: cysteine 404-cysteine 416, cysteine 410-cysteine 425, and cysteine 427-cysteine 441. Positions 443, 444, and 446 each coordinate Ca(2+). In terms of domain architecture, EGF-like 2; calcium-binding spans 443–484 (DIDECAEGRHYCRENTMCVNTPGSFMCICKTGYIRIDDYSCT). Disulfide bonds link cysteine 447–cysteine 460, cysteine 454–cysteine 469, cysteine 471–cysteine 483, cysteine 489–cysteine 502, cysteine 496–cysteine 511, cysteine 513–cysteine 524, cysteine 528–cysteine 538, cysteine 532–cysteine 544, and cysteine 546–cysteine 555. Asparagine 462, threonine 463, and serine 466 together coordinate Ca(2+). Residues 485–525 (EHDECLTNQHNCDENALCFNTVGGHNCVCKPGYTGNGTTCK) enclose the EGF-like 3; calcium-binding domain. N-linked (GlcNAc...) asparagine glycosylation is present at asparagine 520. The 31-residue stretch at 526 to 556 (AFCKDGCRNGGACIAANVCACPQGFTGPSCE) folds into the EGF-like 4 domain. Threonine 551 carries an O-linked (GlcNAc...) threonine glycan. Aspartate 558, isoleucine 559, and glutamate 561 together coordinate Ca(2+). One can recognise an EGF-like 5; calcium-binding domain in the interval 558 to 604 (DIDECSEGFVQCDSRANCINLPGWYHCECRDGYHDNGMFAPGGESCE). Cystine bridges form between cysteine 562/cysteine 575, cysteine 569/cysteine 584, and cysteine 586/cysteine 603. The Ca(2+) site is built by asparagine 577, leucine 578, and tryptophan 581. Residues aspartate 605, isoleucine 606, and glutamate 608 each contribute to the Ca(2+) site. An EGF-like 6; calcium-binding domain is found at 605-640 (DIDECGTGRHSCTNDTICFNLDGGYDCRCPHGKNCT). 3 disulfide bridges follow: cysteine 609-cysteine 622, cysteine 616-cysteine 631, and cysteine 633-cysteine 639. Asparagine 618 is a glycosylation site (N-linked (GlcNAc...) asparagine). The Ca(2+) site is built by asparagine 624, leucine 625, and glycine 628. N-linked (GlcNAc...) asparagine glycosylation occurs at asparagine 638. The VWFC 2 domain occupies 701-759 (SQCLHQNGETVYNSGDTWVQDCRQCRCLQGEVDCWPLACPEVECEFSVLPENECCPRCV).

As to quaternary structure, homotrimer. Interacts with NICOL1; this interaction triggers epididymal differentiation. Interacts (via EGF domains) with ROBO3 (via FN domains); binding to ROBO3 induces repulsive guidance cue for commissural axons. Expressed in brain and testis but not in epididymis. Expressed in regions flanking the commissural axon trajectory, including the ventral horn.

It is found in the secreted. In terms of biological role, plays multiple roles in neural tissues, regulates neuronal proliferation, survival, differentiation, polarization, as well as axon guidance and synaptic functions. Plays an important role in axon development during neuronal differentiation through the MAPK intracellular signaling pathway. Via binding to its receptor ROBO3, plays a role in axon guidance, functioning as a repulsive axon guidance cue that contributes to commissural axon guidance to the midline. Required for neuron survival through the modulation of MAPK signaling pathways too. Involved in the regulation of hypothalamic GNRH secretion and the control of puberty. Epididymal-secreted protein that signals through a ROS1-pathway to regulate the epididymal initial segment (IS) maturation, sperm maturation and male fertility. This chain is Protein kinase C-binding protein NELL2, found in Mus musculus (Mouse).